A 533-amino-acid chain; its full sequence is 2-isopropylmalate synthase (533 aa).

The 263-residue stretch at 8-270 folds into the Pyruvate carboxyltransferase domain; that stretch reads VIIFDTTLRD…YFNPFLGRPA (263 aa). Mn(2+) is bound by residues Asp17, His209, His211, and Asn245. Residues 409 to 533 are regulatory domain; that stretch reads RLELVQVSCG…KEKTPEMLQV (125 aa).

Belongs to the alpha-IPM synthase/homocitrate synthase family. LeuA type 1 subfamily. As to quaternary structure, homodimer. Mn(2+) is required as a cofactor.

The protein localises to the cytoplasm. It carries out the reaction 3-methyl-2-oxobutanoate + acetyl-CoA + H2O = (2S)-2-isopropylmalate + CoA + H(+). The protein operates within amino-acid biosynthesis; L-leucine biosynthesis; L-leucine from 3-methyl-2-oxobutanoate: step 1/4. Catalyzes the condensation of the acetyl group of acetyl-CoA with 3-methyl-2-oxobutanoate (2-ketoisovalerate) to form 3-carboxy-3-hydroxy-4-methylpentanoate (2-isopropylmalate). The protein is 2-isopropylmalate synthase of Microcystis aeruginosa.